Reading from the N-terminus, the 487-residue chain is Chromosomal replication initiator protein DnaA (487 aa).

The domain I, interacts with DnaA modulators stretch occupies residues 1–92 (MTIKGGVVSQ…SELWTANDAT (92 aa)). The domain II stretch occupies residues 92–144 (TGRRLDLKSRLEFESVGGAGYEAKAEPIEIVLPVSSDVPALAPTNGSKPSPVQ). The interval 145–367 (GLQERFTFDT…GALNTLSARA (223 aa)) is domain III, AAA+ region. The ATP site is built by glycine 189, glycine 191, lysine 192, and threonine 193. The domain IV, binds dsDNA stretch occupies residues 368–487 (GEGVSRLTLE…LETITRKLRG (120 aa)).

Belongs to the DnaA family. As to quaternary structure, oligomerizes as a right-handed, spiral filament on DNA at oriC.

It is found in the cytoplasm. Plays an essential role in the initiation and regulation of chromosomal replication. ATP-DnaA binds to the origin of replication (oriC) to initiate formation of the DNA replication initiation complex once per cell cycle. Binds the DnaA box (a 9 base pair repeat at the origin) and separates the double-stranded (ds)DNA. Forms a right-handed helical filament on oriC DNA; dsDNA binds to the exterior of the filament while single-stranded (ss)DNA is stabiized in the filament's interior. The ATP-DnaA-oriC complex binds and stabilizes one strand of the AT-rich DNA unwinding element (DUE), permitting loading of DNA polymerase. After initiation quickly degrades to an ADP-DnaA complex that is not apt for DNA replication. Binds acidic phospholipids. The polypeptide is Chromosomal replication initiator protein DnaA (Caulobacter sp. (strain K31)).